The primary structure comprises 400 residues: Deoxyhypusine synthase-like protein (400 aa).

The interval 372–400 (KLGKEQMPEPQSTEPVATYPCGTPIKGRK) is disordered.

It belongs to the deoxyhypusine synthase family.

The chain is Deoxyhypusine synthase-like protein from Cyanothece sp. (strain PCC 7425 / ATCC 29141).